A 454-amino-acid polypeptide reads, in one-letter code: MTNSSKGRHVAVLPFPFSTHAAPILSIIRRLASAAPDVTFSFFSTPQSIQTLFPSENPENNIRPHAISDGVPEGFVFSGKHHEDINLFLAAGKESFEAGMKAAEAETGRRIDCVVSDAFMWFSCELAEEMGVPWVTLWVSGACSLAAHCYTDLIRETVGMHDTAGREDEIVKFVPGFSEVRLGDLPSGVVYGNLESPFSMMLYKMGQVLHKAAAVAINSFDELEPEPVKVLASKLKLLTCGPFNPISPPPSSNLDEYGCIPWLDRRKAASVAYIGFGTVATPPPVELAALAEALEASSTPFLWSLRDNPKQHLPEGFLKRTSELQKIVPWAPQAQVLAHRSVGVFINHCGWNSVVESVEAGVPIIGRPFFGDHQVDAWMVENVWKIGVRVEGAVFTKGITMSALELVLSHDQKQKELREQVGKYKEFALKAFGPKQRSTCNLSTLLEIVAGYNL.

The signal sequence occupies residues 1–21 (MTNSSKGRHVAVLPFPFSTHA). Residues Ser-18 and His-20 each coordinate an anthocyanidin. The Proton acceptor role is filled by His-20. The active-site Charge relay is the Asp-117. His-148 serves as a coordination point for an anthocyanidin. Residues Ala-331, Gln-333, His-348, Trp-351, Asn-352, Ser-353, and Glu-356 each contribute to the UDP-alpha-D-glucose site. Gly-371 lines the an anthocyanidin pocket. Asp-372 serves as a coordination point for UDP-alpha-D-glucose. An N-linked (GlcNAc...) asparagine glycan is attached at Asn-441.

This sequence belongs to the UDP-glycosyltransferase family. In terms of assembly, monomer. As to expression, mostly expressed in leaves and flowers and, to a lower extent, in roots. In flowers, mainly observed in petals, stamens and scapes, and at lower levels in pistils and toruses.

The catalysed reaction is cyanidin + UDP-alpha-D-galactose = cyanidin 3-O-beta-D-galactoside + UDP + H(+). It carries out the reaction cyanidin + UDP-alpha-D-glucose = cyanidin 3-O-beta-D-glucoside + UDP + H(+). It catalyses the reaction delphinidin + UDP-alpha-D-glucose = delphinidin 3-O-beta-D-glucoside + UDP. The enzyme catalyses peonidin + UDP-alpha-D-glucose = peonidin 3-O-beta-D-glucoside + UDP. The catalysed reaction is pelargonidin + UDP-alpha-D-glucose = pelargonidin 3-O-beta-D-glucoside + UDP. It carries out the reaction delphinidin + UDP-alpha-D-galactose = delphinidin 3-O-beta-D-galactoside + UDP + H(+). It catalyses the reaction pelargonidin + UDP-alpha-D-galactose = pelargonidin 3-O-beta-D-galactoside betaine + UDP. The enzyme catalyses peonidin + UDP-alpha-D-galactose = peonidin 3-O-beta-D-galactoside + UDP. The catalysed reaction is petunidin + UDP-alpha-D-galactose = petunidin 3-O-beta-D-galactoside + UDP. It carries out the reaction petunidin + UDP-alpha-D-glucose = petunidin 3-O-beta-D-glucoside + UDP. It catalyses the reaction an anthocyanidin + UDP-alpha-D-glucose + H(+) = an anthocyanidin 3-O-beta-D-glucoside + UDP. The enzyme catalyses an anthocyanidin + UDP-alpha-D-galactose = an anthocyanidin 3-O-beta-D-galactoside + UDP. It participates in pigment biosynthesis; anthocyanin biosynthesis. Functionally, flavonoid 3-O-glycosyltransferase involved in the biosynthesis of anthocyanins conferring flower red/pink colors, mainly anthocyanidin 3-O-glycosides. Catalyzes the addition of UDP-sugar to the 3-OH of anthocyanidin, with a preference for UDP-galactose (UDP-Gal) as sugar donor and cyanidin as substrate; able to use delphinidin, pelargonidin, peonidin and petunidin as substrates in the presence of UDP-Gal, but barely active on malvidin. Can also use UDP-glucose (UDP-Glu) as sugar donor with cyanidin, delphinidin, pelargonidin, peonidin and petunidin as substrates, but not active on malvidin. This Rhododendron delavayi (Rhododendron) protein is Anthocyanidin 3-O-galactosyltransferase 3GT6.